Reading from the N-terminus, the 304-residue chain is Murein tetrapeptide carboxypeptidase (304 aa).

Ser106 acts as the Nucleophile in catalysis. Catalysis depends on charge relay system residues Glu200 and His270.

This sequence belongs to the peptidase S66 family.

The protein resides in the cytoplasm. The catalysed reaction is N-acetyl-D-glucosaminyl-N-acetylmuramoyl-L-alanyl-meso-2,6-diaminoheptanedioyl-D-alanine + H2O = N-acetyl-D-glucosaminyl-N-acetylmuramoyl-L-alanyl-meso-2,6-diaminoheptanedioate + D-alanine. Its pathway is cell wall biogenesis; peptidoglycan recycling. Its function is as follows. Releases the terminal D-alanine residue from the cytoplasmic tetrapeptide recycling product L-Ala-gamma-D-Glu-meso-Dap-D-Ala. Can also cleave D-Ala from murein derivatives containing the tetrapeptide, i.e. MurNAc-tetrapeptide, UDP-MurNAc-tetrapeptide, GlcNAc-MurNAc-tetrapeptide, and GlcNAc-anhMurNAc-tetrapeptide. Does not act on murein sacculi or cross-linked muropeptides. The tripeptides produced by the LcdA reaction can then be reused as peptidoglycan building blocks; LcdA is thereby involved in murein recycling. This chain is Murein tetrapeptide carboxypeptidase (ldcA), found in Escherichia coli O157:H7.